A 377-amino-acid chain; its full sequence is Citrate synthase (377 aa).

Residues His-258 and Asp-313 contribute to the active site.

Belongs to the citrate synthase family. In terms of assembly, homodimer. Post-translationally, the N-terminus is blocked by acetylation.

The enzyme catalyses oxaloacetate + acetyl-CoA + H2O = citrate + CoA + H(+). Its pathway is carbohydrate metabolism; tricarboxylic acid cycle; isocitrate from oxaloacetate: step 1/2. With respect to regulation, allosterically inhibited by NADH. This is Citrate synthase (gltA) from Saccharolobus solfataricus (strain ATCC 35092 / DSM 1617 / JCM 11322 / P2) (Sulfolobus solfataricus).